The chain runs to 265 residues: Putative hydro-lyase PST_2764 (265 aa).

It belongs to the D-glutamate cyclase family.

The chain is Putative hydro-lyase PST_2764 from Stutzerimonas stutzeri (strain A1501) (Pseudomonas stutzeri).